The sequence spans 500 residues: Glutamyl-tRNA(Gln) amidotransferase subunit A (500 aa).

Catalysis depends on charge relay system residues Lys81 and Ser161. The Acyl-ester intermediate role is filled by Ser185.

Belongs to the amidase family. GatA subfamily. In terms of assembly, heterotrimer of A, B and C subunits.

The enzyme catalyses L-glutamyl-tRNA(Gln) + L-glutamine + ATP + H2O = L-glutaminyl-tRNA(Gln) + L-glutamate + ADP + phosphate + H(+). Allows the formation of correctly charged Gln-tRNA(Gln) through the transamidation of misacylated Glu-tRNA(Gln) in organisms which lack glutaminyl-tRNA synthetase. The reaction takes place in the presence of glutamine and ATP through an activated gamma-phospho-Glu-tRNA(Gln). This is Glutamyl-tRNA(Gln) amidotransferase subunit A from Rhodospirillum rubrum (strain ATCC 11170 / ATH 1.1.1 / DSM 467 / LMG 4362 / NCIMB 8255 / S1).